Reading from the N-terminus, the 351-residue chain is Soluble TNF receptor II (351 aa).

A signal peptide spans 1–19 (MKSVLYSYILFLSCIIING). TNFR-Cys repeat units follow at residues 31–67 (KCKD…NTQC) and 69–110 (PCGS…NRIC). Disulfide bonds link C32-C43, C44-C57, C47-C67, C70-C85, C88-C102, and C92-C110. 3 N-linked (GlcNAc...) asparagine; by host glycosylation sites follow: N103, N191, and N250.

It belongs to the orthopoxvirus OPG002 family.

The protein localises to the secreted. Its function is as follows. Inhibits host immune defense by binding to host TNF and various chemokines in the extracellular space. Binds host CC chemokines (beta chemokines) and CXC chemokines (alpha chemokines). The polypeptide is Soluble TNF receptor II (OPG002) (Bos taurus (Bovine)).